We begin with the raw amino-acid sequence, 768 residues long: MSNLSKGTGSRKDTKMRIRAFPMTMDEKYVNSIWDLLKNAIQEIQRKNNSGLSFEELYRNAYTMVLHKHGEKLYTGLREVVTEHLINKVREDVLNSLNNNFLQTLNQAWNDHQTAMVMIRDILMYMDRVYVQQNNVENVYNLGLIIFRDQVVRYGCIRDHLRQTLLDMIARERKGEVVDRGAIRNACQMLMILGLEGRSVYEEDFEAPFLEMSAEFFQMESQKFLAENSASVYIKKVEARINEEIERVMHCLDKSTEEPIVKVVERELISKHMKTIVEMENSGLVHMLKNGKTEDLGCMYKLFSRVPNGLKTMCECMSSYLREQGKALVSEEGEGKNPVDYIQGLLDLKSRFDRFLLESFNNDRLFKQTIAGDFEYFLNLNSRSPEYLSLFIDDKLKKGVKGLTEQEVETILDKAMVLFRFMQEKDVFERYYKQHLARRLLTNKSVSDDSEKNMISKLKTECGCQFTSKLEGMFRDMSISNTTMDEFRQHLQATGVSLGGVDLTVRVLTTGYWPTQSATPKCNIPPAPRHAFEIFRRFYLAKHSGRQLTLQHHMGSADLNATFYGPVKKEDGSEVGVGGAQVTGSNTRKHILQVSTFQMTILMLFNNREKYTFEEIQQETDIPERELVRALQSLACGKPTQRVLTKEPKSKEIENGHIFTVNDQFTSKLHRVKIQTVAAKQGESDPERKETRQKVDDDRKHEIEAAIVRIMKSRKKMQHNVLVAEVTQQLKARFLPSPVVIKKRIEGLIEREYLARTPEDRKVYTYVA.

S2 bears the N-acetylserine mark. Positions 2–41 (SNLSKGTGSRKDTKMRIRAFPMTMDEKYVNSIWDLLKNAI) are interaction with KLHL18. S585 is modified (phosphoserine). The tract at residues 677 to 698 (VAAKQGESDPERKETRQKVDDD) is disordered. Over residues 682–698 (GESDPERKETRQKVDDD) the composition is skewed to basic and acidic residues. Residues 698–760 (DRKHEIEAAI…REYLARTPED (63 aa)) form the Cullin neddylation domain. A Glycyl lysine isopeptide (Lys-Gly) (interchain with G-Cter in NEDD8) cross-link involves residue K712.

The protein belongs to the cullin family. In terms of assembly, forms neddylation-dependent homodimers. Component of multiple BCR (BTB-CUL3-RBX1) E3 ubiquitin-protein ligase complexes formed of CUL3, RBX1 and a variable BTB domain-containing protein acting as both, adapter to cullin and substrate recognition subunit. The BCR complex may be active as a heterodimeric complex, in which NEDD8, covalently attached to one CUL3 molecule, binds to the C-terminus of a second CUL3 molecule. Interacts with RBX1, RNF7, CYCE and TIP120A/CAND1. Part of the BCR(SPOP) containing SPOP, and of BCR containing homodimeric SPOPL or the heterodimer formed by SPOP and SPOPL. Part of the probable BCR(KLHL9-KLHL13) complex with BTB domain proteins KLHL9 and KLHL13. Part of the BCR(KLHL41) complex containing KLHL41. Component of the BCR(KLHL12) E3 ubiquitin ligase complex, at least composed of CUL3 and KLHL12 and RBX1. Component of the BCR(KLHL3) E3 ubiquitin ligase complex, at least composed of CUL3 and KLHL3 and RBX1. Part of the BCR(ENC1) complex containing ENC1. Part of a complex consisting of BMI1/PCGF4, CUL3 and SPOP. Part of a complex consisting of BRMS1, CUL3 and SPOP. Component of the BCR(KLHL21) E3 ubiquitin ligase complex, at least composed of CUL3, KLHL21 and RBX1. Component of the BCR(KLHL22) E3 ubiquitin ligase complex, at least composed of CUL3, KLHL22 and RBX1. Component of the BCR(KLHL25) E3 ubiquitin ligase complex, at least composed of CUL3, KLHL25 and RBX1. Part of a complex consisting of MACROH2A1, CUL3 and SPOP. Component of the BCR(KLHL42) E3 ubiquitin ligase complex, at least composed of CUL3 and KLHL42. Interacts with KLHL42 (via the BTB domain). Interacts with KATNA1; the interaction is enhanced by KLHL42. Component of the BCR(KBTBD8) E3 ubiquitin ligase complex, at least composed of CUL3, KBTBD8 and RBX1. Interacts with KCTD5, KLHL9, KLHL11, KLHL13, GAN, ZBTB16, KLHL3, KLHL15, KLHL20, KLHL36, GMCL2, BTBD1. Part of a complex that contains CUL3, RBX1 and GAN. Interacts (via BTB domain) with KLHL17; the interaction regulates surface GRIK2 expression. Interacts with KCTD7. Part of the BCR(GAN) complex containing GAN. Part of the BCR(KEAP1) complex containing KEAP1. Interacts with KLHL10. Interacts with KAT5 and ATF2. Interacts with KCTD17 in the BCR(KCTD17) E3 ubiquitin ligase complex, at least composed of CUL3, KCTD17 and RBX1. Interacts (when neddylated) with ARIH1; leading to activate the E3 ligase activity of ARIH1. Interacts with COPS9 isoform 2. Interacts with PPP2R5B; this interaction is indirect and mediated through KLHL15-binding and leads to PPP2R5B proteasomal degradation. Interacts with RBBP8/CtIP; this interaction is indirect and mediated through KLHL15-binding and leads to RBBP8 proteasomal degradation. Interacts with KLHL24 in the BCR(KLHL24) E3 ubiquitin ligase complex, composed of CUL3, RBX1 and KLHL24. Interacts with RHOBTB2. Interacts with AURKA and KLHL18 (via BTB domain). Interacts (unneddylated form) with DCUN1D1, DCUN1D2, DCUN1D3, DCUN1D4 and DCUN1D5; these interactions promote the cullin neddylation. Component of a BCR3 (BTB-CUL3-RBX1) E3 ubiquitin ligase complex, also named Cul3-RING ubiquitin ligase complex CUL3(KBTBD6/7), composed of CUL3, RBX1, KBTBD6 and KBTBD7. Component of the BCR(KBTBD2) E3 ubiquitin ligase complex, at least composed of CUL3, KBTBD2 and RBX1. Interacts with KBTBD2 (via the BTB domain). Component of the BCR(KBTBD4) E3 ubiquitin ligase complex, at least composed of CUL3, KBTBD4 and RBX1. Component of the BCR(ARMC5) E3 ubiquitin ligase complex, composed of CUL3, ARMC5 and RBX1. Neddylated. Attachment of NEDD8 is required for the E3 ubiquitin-protein ligase activity of the BCR complex. Deneddylated via its interaction with the COP9 signalosome (CSN) complex. In terms of tissue distribution, brain, spermatozoa, and testis (at protein level). Widely expressed.

Its subcellular location is the nucleus. The protein localises to the golgi apparatus. It is found in the cell projection. The protein resides in the cilium. It localises to the flagellum. Its subcellular location is the cytoplasm. The protein localises to the cytoskeleton. It is found in the spindle. The protein resides in the microtubule organizing center. It localises to the centrosome. Its subcellular location is the spindle pole. Its pathway is protein modification; protein ubiquitination. In terms of biological role, core component of multiple cullin-RING-based BCR (BTB-CUL3-RBX1) E3 ubiquitin-protein ligase complexes which mediate the ubiquitination and subsequent proteasomal degradation of target proteins. BCR complexes and ARIH1 collaborate in tandem to mediate ubiquitination of target proteins. As a scaffold protein may contribute to catalysis through positioning of the substrate and the ubiquitin-conjugating enzyme. The E3 ubiquitin-protein ligase activity of the complex is dependent on the neddylation of the cullin subunit and is inhibited by the association of the deneddylated cullin subunit with TIP120A/CAND1. The functional specificity of the BCR complex depends on the BTB domain-containing protein as the substrate recognition component. BCR(KLHL42) is involved in ubiquitination of KATNA1. BCR(SPOP) is involved in ubiquitination of BMI1/PCGF4, BRMS1, MACROH2A1 and DAXX, GLI2 and GLI3. Can also form a cullin-RING-based BCR (BTB-CUL3-RBX1) E3 ubiquitin-protein ligase complex containing homodimeric SPOPL or the heterodimer formed by SPOP and SPOPL; these complexes have lower ubiquitin ligase activity. BCR(KLHL9-KLHL13) controls the dynamic behavior of AURKB on mitotic chromosomes and thereby coordinates faithful mitotic progression and completion of cytokinesis. BCR(KLHL12) is involved in ER-Golgi transport by regulating the size of COPII coats, thereby playing a key role in collagen export, which is required for embryonic stem (ES) cells division: BCR(KLHL12) acts by mediating monoubiquitination of SEC31 (SEC31A or SEC31B). BCR(KLHL3) acts as a regulator of ion transport in the distal nephron; by mediating ubiquitination of WNK4. The BCR(KLHL20) E3 ubiquitin ligase complex is involved in interferon response and anterograde Golgi to endosome transport: it mediates both ubiquitination leading to degradation and 'Lys-33'-linked ubiquitination. The BCR(KLHL21) E3 ubiquitin ligase complex regulates localization of the chromosomal passenger complex (CPC) from chromosomes to the spindle midzone in anaphase and mediates the ubiquitination of AURKB. The BCR(KLHL22) ubiquitin ligase complex mediates monoubiquitination of PLK1, leading to PLK1 dissociation from phosphoreceptor proteins and subsequent removal from kinetochores, allowing silencing of the spindle assembly checkpoint (SAC) and chromosome segregation. The BCR(KLHL22) ubiquitin ligase complex is also responsible for the amino acid-stimulated 'Lys-48' polyubiquitination and proteasomal degradation of DEPDC5. Through the degradation of DEPDC5, releases the GATOR1 complex-mediated inhibition of the TORC1 pathway. The BCR(KLHL25) ubiquitin ligase complex is involved in translational homeostasis by mediating ubiquitination and subsequent degradation of hypophosphorylated EIF4EBP1 (4E-BP1). The BCR(KLHL25) ubiquitin ligase complex is also involved in lipid synthesis by mediating ubiquitination and degradation of ACLY. The BCR(KBTBD8) complex acts by mediating monoubiquitination of NOLC1 and TCOF1, leading to remodel the translational program of differentiating cells in favor of neural crest specification. Involved in ubiquitination of cyclin E and of cyclin D1 (in vitro) thus involved in regulation of G1/S transition. Involved in the ubiquitination of KEAP1, ENC1 and KLHL41. In concert with ATF2 and RBX1, promotes degradation of KAT5 thereby attenuating its ability to acetylate and activate ATM. The BCR(KCTD17) E3 ubiquitin ligase complex mediates ubiquitination and degradation of TCHP, a down-regulator of cilium assembly, thereby inducing ciliogenesis. The BCR(KLHL24) E3 ubiquitin ligase complex mediates ubiquitination of KRT14, controls KRT14 levels during keratinocytes differentiation, and is essential for skin integrity. The BCR(KLHL18) E3 ubiquitin ligase complex mediates the ubiquitination of AURKA leading to its activation at the centrosome which is required for initiating mitotic entry. The BCR(KEAP1) E3 ubiquitin ligase complex acts as a key sensor of oxidative and electrophilic stress by mediating ubiquitination and degradation of NFE2L2/NRF2, a transcription factor regulating expression of many cytoprotective genes. As part of the CUL3(KBTBD6/7) E3 ubiquitin ligase complex functions mediates 'Lys-48' ubiquitination and proteasomal degradation of TIAM1. By controlling the ubiquitination of that RAC1 guanine exchange factors (GEF), regulates RAC1 signal transduction and downstream biological processes including the organization of the cytoskeleton, cell migration and cell proliferation. The BCR(KBTBD4) E3 ubiquitin ligase complex targets CoREST corepressor complex components RCOR1, KDM1A/LSD1 and HDAC2 for proteasomal degradation with RCOR1 likely to be the primary target while degradation of KDM1A and HDAC2 is likely due to their association with RCOR1. It also targets RCOR3, MIER2 and MIER3 for proteasomal degradation as well as associated proteins ZNF217 and RREB1 with degradation being dependent on the presence of an ELM2 domain in the target proteins. The BCR(ARMC5) complex mediates premature transcription termination of transcripts that are unfavorably configured for transcriptional elongation by mediating ubiquitination of Pol II subunit POLR2A. Required for 'Lys-63'-linked ubiquitination of large ribosomal subunit protein MRPL12. This is Cullin-3 from Homo sapiens (Human).